A 426-amino-acid chain; its full sequence is Lipid droplet localized protein (426 aa).

Residues 278–298 (FYGYLIGLWIMFLSIFVKYPF) form a helical membrane-spanning segment.

It belongs to the saccharopine dehydrogenase family.

It localises to the membrane. The protein localises to the lipid droplet. This Caenorhabditis elegans protein is Lipid droplet localized protein.